A 404-amino-acid polypeptide reads, in one-letter code: Tryptophan synthase beta chain (404 aa).

Lys-90 carries the N6-(pyridoxal phosphate)lysine modification.

Belongs to the TrpB family. Tetramer of two alpha and two beta chains. It depends on pyridoxal 5'-phosphate as a cofactor.

It catalyses the reaction (1S,2R)-1-C-(indol-3-yl)glycerol 3-phosphate + L-serine = D-glyceraldehyde 3-phosphate + L-tryptophan + H2O. It participates in amino-acid biosynthesis; L-tryptophan biosynthesis; L-tryptophan from chorismate: step 5/5. Its function is as follows. The beta subunit is responsible for the synthesis of L-tryptophan from indole and L-serine. The sequence is that of Tryptophan synthase beta chain (trpB) from Geobacillus stearothermophilus (Bacillus stearothermophilus).